We begin with the raw amino-acid sequence, 295 residues long: Enolase-phosphatase E1 (295 aa).

Residues D20 and E22 each coordinate Mg(2+). Residues 153–154 and K187 each bind substrate; that span reads SS. A Mg(2+)-binding site is contributed by D212. Residues 260–295 form a disordered region; that stretch reads ETKEENGGATNGKRKIEETNDDVAEEDKAQVYPNKK.

This sequence belongs to the HAD-like hydrolase superfamily. MasA/MtnC family. Monomer. Mg(2+) serves as cofactor.

The protein resides in the cytoplasm. It is found in the nucleus. The enzyme catalyses 5-methylsulfanyl-2,3-dioxopentyl phosphate + H2O = 1,2-dihydroxy-5-(methylsulfanyl)pent-1-en-3-one + phosphate. Its pathway is amino-acid biosynthesis; L-methionine biosynthesis via salvage pathway; L-methionine from S-methyl-5-thio-alpha-D-ribose 1-phosphate: step 3/6. It participates in amino-acid biosynthesis; L-methionine biosynthesis via salvage pathway; L-methionine from S-methyl-5-thio-alpha-D-ribose 1-phosphate: step 4/6. Functionally, bifunctional enzyme that catalyzes the enolization of 2,3-diketo-5-methylthiopentyl-1-phosphate (DK-MTP-1-P) into the intermediate 2-hydroxy-3-keto-5-methylthiopentenyl-1-phosphate (HK-MTPenyl-1-P), which is then dephosphorylated to form the acireductone 1,2-dihydroxy-3-keto-5-methylthiopentene (DHK-MTPene). In Anopheles gambiae (African malaria mosquito), this protein is Enolase-phosphatase E1.